The sequence spans 185 residues: Hypoxanthine/guanine phosphoribosyltransferase (185 aa).

It belongs to the purine/pyrimidine phosphoribosyltransferase family. Archaeal HPRT subfamily. As to quaternary structure, homodimer.

The protein localises to the cytoplasm. The enzyme catalyses IMP + diphosphate = hypoxanthine + 5-phospho-alpha-D-ribose 1-diphosphate. It carries out the reaction GMP + diphosphate = guanine + 5-phospho-alpha-D-ribose 1-diphosphate. It participates in purine metabolism; IMP biosynthesis via salvage pathway; IMP from hypoxanthine: step 1/1. Its function is as follows. Catalyzes a salvage reaction resulting in the formation of IMP that is energically less costly than de novo synthesis. The polypeptide is Hypoxanthine/guanine phosphoribosyltransferase (hpt) (Methanococcus maripaludis (strain DSM 14266 / JCM 13030 / NBRC 101832 / S2 / LL)).